The primary structure comprises 453 residues: MFKPELLSPAGTLKNMRYAFAYGADAVYAGQPRYSLRVRNNEFNHENLQLGINEAHALGKKFYVVVNIAPHNAKLKTFIRDLKPVVEMGPDALIMSDPGLIMLVREHFPEMPIHLSVQANAVNWATVKFWQQMGLTRVILSRELSLEEIEEIRNQVPDMEIEIFVHGALCMAYSGRCLLSGYINKRDPNQGTCTNACRWEYNVQEGKEDDVGNIVHKYEPIPVQNVEPTLGIGAPTDKVFMIEEAQRPGEYMTAFEDEHGTYIMNSKDLRAIAHVERLTKMGVHSLKIEGRTKSFYYCARTAQVYRKAIDDAAAGKPFDTSLLETLEGLAHRGYTEGFLRRHTHDDYQNYEYGYSVSDRQQFVGEFTGERKGDLAAVAVKNKFSVGDSLELMTPQGNINFTLEHMENAKGEAMPIAPGDGYTVWLPVPQDLELNYALLMRNFSGETTRNPHGK.

The protein belongs to the peptidase U32 family.

Involved in prephenate-dependent formation of 5-hydroxyuridine (ho5U) modification at position 34 in tRNAs, the first step in 5-carboxymethoxyuridine (cmo5U) biosynthesis. Involved differently in ho5U formation in each tRNA; tRNA(Leu3) and tRNA(Pro3) are major targets of TrhP. The polypeptide is tRNA hydroxylation protein P (Escherichia coli (strain K12)).